The chain runs to 228 residues: Uracil-DNA glycosylase (228 aa).

The Proton acceptor role is filled by aspartate 64.

The protein belongs to the uracil-DNA glycosylase (UDG) superfamily. UNG family.

Its subcellular location is the cytoplasm. The enzyme catalyses Hydrolyzes single-stranded DNA or mismatched double-stranded DNA and polynucleotides, releasing free uracil.. In terms of biological role, excises uracil residues from the DNA which can arise as a result of misincorporation of dUMP residues by DNA polymerase or due to deamination of cytosine. The chain is Uracil-DNA glycosylase from Pectobacterium atrosepticum (strain SCRI 1043 / ATCC BAA-672) (Erwinia carotovora subsp. atroseptica).